The chain runs to 344 residues: MEARLKELKQKALKLIEEAKELKSLNDVRVAYLGKKGPITEVLRGMGKLSPEERPRMGALVNEVREAIQTRLEEKVSNLEKAVMEAKLASETIDVTLPGRPVETGCHHPLTAVVEQIEDVFIGMGYEVAEGTEVEKDYYNFEALNLPKDHPARDMQDTFYITEETLLRTHTSSVQARTMENNKEKGPIKIICPGKVYRRDDDDATHSHQFMQIEGLVIDKNIRMSDLKGTLQVFVKKMFGEDREIRLRPSFFPFTEPSVEMDISCMMCHGKGCGTCKGTGWIEILGAGMVHPNVLEMAGYDSKEYQGFAFGMGAERIAMLKYGVDDIRHFYTNDVRFLQQFKRA.

E256 provides a ligand contact to Mg(2+).

This sequence belongs to the class-II aminoacyl-tRNA synthetase family. Phe-tRNA synthetase alpha subunit type 1 subfamily. As to quaternary structure, tetramer of two alpha and two beta subunits. It depends on Mg(2+) as a cofactor.

It is found in the cytoplasm. It catalyses the reaction tRNA(Phe) + L-phenylalanine + ATP = L-phenylalanyl-tRNA(Phe) + AMP + diphosphate + H(+). The polypeptide is Phenylalanine--tRNA ligase alpha subunit (Bacillus cytotoxicus (strain DSM 22905 / CIP 110041 / 391-98 / NVH 391-98)).